The following is a 348-amino-acid chain: MSDRLTLLRPDDWHIHLRDGAALANTVGDAARTFGRAIVMPNLVPPVRNAAEADAYRQRILAARPAASRFEPLMVLYLTDRTSTEEIRTAKASGFVHAAKLYPAGATTNSDSGVTRIDNIFEALEAMAEVGMPLLVHGEVTRAEVDVFDREKQFIDEHLRRVVERFPTLKVVFEHITTGDAAQFVREAPANVGATITAHHLLYNRNHMLVGGIRPHFYCLPILKRNTHQEALLDAAVSGNPKFFLGTDSAPHARHAKEAACGCAGCYSAYAAIELYAEAFEQRNALDKLEGFASLHGPDFYGLPRNTDRITLVREEWQAPASLPFGDFDVVPLRAGETLRWKLLEAGA.

Residues His14 and His16 each contribute to the Zn(2+) site. Substrate contacts are provided by residues 16-18 (HLR) and Asn42. Residues Lys100, His137, and His175 each contribute to the Zn(2+) site. Lys100 carries the N6-carboxylysine modification. His137 provides a ligand contact to substrate. Leu220 is a binding site for substrate. Zn(2+) is bound at residue Asp248. Asp248 is an active-site residue. 2 residues coordinate substrate: His252 and Ala264.

This sequence belongs to the metallo-dependent hydrolases superfamily. DHOase family. Class II DHOase subfamily. In terms of assembly, homodimer. Zn(2+) serves as cofactor.

The catalysed reaction is (S)-dihydroorotate + H2O = N-carbamoyl-L-aspartate + H(+). Its pathway is pyrimidine metabolism; UMP biosynthesis via de novo pathway; (S)-dihydroorotate from bicarbonate: step 3/3. In terms of biological role, catalyzes the reversible cyclization of carbamoyl aspartate to dihydroorotate. The protein is Dihydroorotase of Pseudomonas aeruginosa (strain ATCC 15692 / DSM 22644 / CIP 104116 / JCM 14847 / LMG 12228 / 1C / PRS 101 / PAO1).